Consider the following 432-residue polypeptide: Serine hydroxymethyltransferase (432 aa).

(6S)-5,6,7,8-tetrahydrofolate is bound by residues Leu131 and 135 to 137 (GHL). Lys240 carries the N6-(pyridoxal phosphate)lysine modification.

This sequence belongs to the SHMT family. As to quaternary structure, homodimer. Pyridoxal 5'-phosphate is required as a cofactor.

The protein localises to the cytoplasm. The catalysed reaction is (6R)-5,10-methylene-5,6,7,8-tetrahydrofolate + glycine + H2O = (6S)-5,6,7,8-tetrahydrofolate + L-serine. It functions in the pathway one-carbon metabolism; tetrahydrofolate interconversion. The protein operates within amino-acid biosynthesis; glycine biosynthesis; glycine from L-serine: step 1/1. Its function is as follows. Catalyzes the reversible interconversion of serine and glycine with tetrahydrofolate (THF) serving as the one-carbon carrier. This reaction serves as the major source of one-carbon groups required for the biosynthesis of purines, thymidylate, methionine, and other important biomolecules. Also exhibits THF-independent aldolase activity toward beta-hydroxyamino acids, producing glycine and aldehydes, via a retro-aldol mechanism. This Acidiphilium cryptum (strain JF-5) protein is Serine hydroxymethyltransferase.